Consider the following 218-residue polypeptide: MDKSESTSAGRNRRRRLRRGSRSASSSSDANFRVLSQQLSRLNKTLAAGRPTINHPTFVGSERCKPGYTFTSITLRPPKIDRESYYGKRLLLPDSVMEYDKKLVSRIQIRVNPLPKFDSTVWVTVRKVSASSDLSVAAISAMFADGASPVLVYQYAASGVQANNKLLYDLSAMRADIGDMRKYAVLVYSKDDTLETDELVLHVDVEHQRIPTSGVLPV.

The residue at position 1 (M1) is an N-acetylmethionine; by host. Low complexity predominate over residues 1–10 (MDKSESTSAG). The interval 1-30 (MDKSESTSAGRNRRRRLRRGSRSASSSSDA) is disordered. A compositionally biased stretch (basic residues) spans 11 to 21 (RNRRRRLRRGS).

This sequence belongs to the cucumovirus capsid protein family.

It is found in the virion. Its function is as follows. Capsid protein. Probably binds RNA and plays a role in packaging. The sequence is that of Capsid protein from Cucumber mosaic virus (strain Y) (CMV).